The sequence spans 124 residues: Large ribosomal subunit protein uL29 (124 aa).

It belongs to the universal ribosomal protein uL29 family.

The chain is Large ribosomal subunit protein uL29 (RPL35) from Triticum aestivum (Wheat).